We begin with the raw amino-acid sequence, 694 residues long: E3 ubiquitin-protein ligase RNF169 (694 aa).

Low complexity-rich tracts occupy residues 1-20 and 33-46; these read MAAAGPSTRASSAAAAAALS and AAKAGAPGPASSPA. The disordered stretch occupies residues 1–46; the sequence is MAAAGPSTRASSAAAAAALSRRGRRGRCDEMAAAKAGAPGPASSPA. S12 carries the phosphoserine modification. The RING-type zinc-finger motif lies at 61–97; sequence CTGCLETPGEVAALPCSHSRCRGCASRAAGPGCRRCR. The interval 100 to 153 is disordered; sequence GSGWARRRARDDGQAAAELMGERARRGQPEPCRPRRDGGAAASGPRPEPEPLAE. The span at 119 to 137 shows a compositional bias: basic and acidic residues; it reads MGERARRGQPEPCRPRRDG. The UMI motif motif lies at 192–200; sequence DDQIHKLLQ. Phosphoserine is present on residues S234 and S236. Residue K273 forms a Glycyl lysine isopeptide (Lys-Gly) (interchain with G-Cter in SUMO2) linkage. The residue at position 326 (S326) is a Phosphoserine. Residue K349 forms a Glycyl lysine isopeptide (Lys-Gly) (interchain with G-Cter in SUMO2) linkage. A phosphoserine mark is found at S390 and S396. T397 is modified (phosphothreonine). Position 472 is a phosphoserine (S472). A Glycyl lysine isopeptide (Lys-Gly) (interchain with G-Cter in SUMO2) cross-link involves residue K498. The disordered stretch occupies residues 515–537; that stretch reads TCHSSEHGGASSGPSLEREQCEE. T541 carries the post-translational modification Phosphothreonine. A Phosphoserine modification is found at S630. The MIU motif motif lies at 651–668; it reads QEEEDQQLALQSHRMFDS. Positions 675 to 687 match the LR motif motif; that stretch reads RRKGSVDQYLLRS. S679 bears the Phosphoserine mark.

Belongs to the RNF169 family. Interacts with DYRK1B. Post-translationally, phosphorylated by DYRK1A; phosphorylation increases RNF169 ability to block accumulation of TP53BP1 at the DSB sites.

The protein localises to the chromosome. Its subcellular location is the nucleus. It is found in the nucleoplasm. It catalyses the reaction S-ubiquitinyl-[E2 ubiquitin-conjugating enzyme]-L-cysteine + [acceptor protein]-L-lysine = [E2 ubiquitin-conjugating enzyme]-L-cysteine + N(6)-ubiquitinyl-[acceptor protein]-L-lysine.. Its pathway is protein modification; protein ubiquitination. Functionally, probable E3 ubiquitin-protein ligase that acts as a regulator of double-strand breaks (DSBs) repair following DNA damage. Functions in a non-canonical fashion to harness RNF168-mediated protein recruitment to DSB-containing chromatin, thereby contributing to regulation of DSB repair pathway utilization. Once recruited to DSB repair sites by recognizing and binding ubiquitin catalyzed by RNF168, competes with TP53BP1 and BRCA1 for association with RNF168-modified chromatin, thereby favouring homologous recombination repair (HRR) and single-strand annealing (SSA) instead of non-homologous end joining (NHEJ) mediated by TP53BP1. E3 ubiquitin-protein ligase activity is not required for regulation of DSBs repair. This Mus musculus (Mouse) protein is E3 ubiquitin-protein ligase RNF169 (Rnf169).